We begin with the raw amino-acid sequence, 97 residues long: MSIRPLHDRVIVKRKEVETKSAGGIVLTGSAATKSTRGEIIAVGKGRILENGTVQPLDVKVGDIVIFNDGYGVKSEKIDNEEVLIMSESDILAIVEA.

It belongs to the GroES chaperonin family. As to quaternary structure, heptamer of 7 subunits arranged in a ring. Interacts with the chaperonin GroEL.

It is found in the cytoplasm. Functionally, together with the chaperonin GroEL, plays an essential role in assisting protein folding. The GroEL-GroES system forms a nano-cage that allows encapsulation of the non-native substrate proteins and provides a physical environment optimized to promote and accelerate protein folding. GroES binds to the apical surface of the GroEL ring, thereby capping the opening of the GroEL channel. The polypeptide is Co-chaperonin GroES (Enterobacter sp. (strain 638)).